Here is a 130-residue protein sequence, read N- to C-terminus: Small ribosomal subunit protein uS9 (130 aa).

This sequence belongs to the universal ribosomal protein uS9 family.

The sequence is that of Small ribosomal subunit protein uS9 from Leptothrix cholodnii (strain ATCC 51168 / LMG 8142 / SP-6) (Leptothrix discophora (strain SP-6)).